Reading from the N-terminus, the 787-residue chain is Formate acetyltransferase (787 aa).

The region spanning 8 to 629 (NIFEQAWDGF…GNSPVHKGVF (622 aa)) is the PFL domain. Cys416 (S-acetylcysteine intermediate) is an active-site residue. Catalysis depends on Cys417, which acts as the Cysteine radical intermediate. The region spanning 645–774 (SPGANPSNKA…LTERVFHEVL (130 aa)) is the Glycine radical domain. Gly749 is modified (glycine radical).

It belongs to the glycyl radical enzyme (GRE) family. PFL subfamily. In terms of assembly, homodimer.

The protein localises to the cytoplasm. It carries out the reaction formate + acetyl-CoA = pyruvate + CoA. Its pathway is fermentation; pyruvate fermentation; formate from pyruvate: step 1/1. The polypeptide is Formate acetyltransferase (pfl) (Lactococcus lactis subsp. lactis (strain IL1403) (Streptococcus lactis)).